A 548-amino-acid polypeptide reads, in one-letter code: Chaperonin GroEL (548 aa).

ATP-binding positions include 30–33, Lys-51, 87–91, Gly-415, 479–481, and Asp-495; these read TLGP, DGTTT, and NAA.

This sequence belongs to the chaperonin (HSP60) family. In terms of assembly, forms a cylinder of 14 subunits composed of two heptameric rings stacked back-to-back. Interacts with the co-chaperonin GroES.

The protein resides in the cytoplasm. It catalyses the reaction ATP + H2O + a folded polypeptide = ADP + phosphate + an unfolded polypeptide.. Its function is as follows. Together with its co-chaperonin GroES, plays an essential role in assisting protein folding. The GroEL-GroES system forms a nano-cage that allows encapsulation of the non-native substrate proteins and provides a physical environment optimized to promote and accelerate protein folding. The sequence is that of Chaperonin GroEL from Vibrio campbellii (strain ATCC BAA-1116).